The primary structure comprises 391 residues: Phosphoglycerate kinase (391 aa).

Substrate contacts are provided by residues Asp-21–Asn-23, Arg-36, His-59–Arg-62, Arg-113, and Arg-146. ATP-binding positions include Lys-197, Glu-319, and Gly-345–Thr-348.

The protein belongs to the phosphoglycerate kinase family. As to quaternary structure, monomer.

The protein localises to the cytoplasm. The enzyme catalyses (2R)-3-phosphoglycerate + ATP = (2R)-3-phospho-glyceroyl phosphate + ADP. The protein operates within carbohydrate degradation; glycolysis; pyruvate from D-glyceraldehyde 3-phosphate: step 2/5. The sequence is that of Phosphoglycerate kinase from Chromobacterium violaceum (strain ATCC 12472 / DSM 30191 / JCM 1249 / CCUG 213 / NBRC 12614 / NCIMB 9131 / NCTC 9757 / MK).